The primary structure comprises 146 residues: 3-hydroxyacyl-[acyl-carrier-protein] dehydratase FabZ (146 aa).

His48 is an active-site residue.

It belongs to the thioester dehydratase family. FabZ subfamily.

The protein resides in the cytoplasm. It catalyses the reaction a (3R)-hydroxyacyl-[ACP] = a (2E)-enoyl-[ACP] + H2O. Its function is as follows. Involved in unsaturated fatty acids biosynthesis. Catalyzes the dehydration of short chain beta-hydroxyacyl-ACPs and long chain saturated and unsaturated beta-hydroxyacyl-ACPs. This is 3-hydroxyacyl-[acyl-carrier-protein] dehydratase FabZ from Campylobacter jejuni subsp. jejuni serotype O:6 (strain 81116 / NCTC 11828).